We begin with the raw amino-acid sequence, 457 residues long: NADP-specific glutamate dehydrogenase (457 aa).

Residue lysine 111 is part of the active site.

This sequence belongs to the Glu/Leu/Phe/Val dehydrogenases family. As to quaternary structure, homohexamer.

The catalysed reaction is L-glutamate + NADP(+) + H2O = 2-oxoglutarate + NH4(+) + NADPH + H(+). This Agaricus bisporus (White button mushroom) protein is NADP-specific glutamate dehydrogenase (gdhA).